Here is a 266-residue protein sequence, read N- to C-terminus: Killer cell lectin-like receptor 6 (266 aa).

The Cytoplasmic segment spans residues 1-44 (MSEPEVTYSTVRLHKSSRLQKLVRHEETQGPREAGYRKCSVCWQ). Residues 45–66 (LIVKALGILCFLLLITVAVLAV) form a helical; Signal-anchor for type II membrane protein membrane-spanning segment. Topologically, residues 67–266 (KIFQYGQHNQ…CGKKLDKFPH (200 aa)) are extracellular. N-linked (GlcNAc...) asparagine glycosylation is found at asparagine 87 and asparagine 104. Positions 143-261 (GVKYWFCYRT…SHYCICGKKL (119 aa)) constitute a C-type lectin domain. 4 disulfide bridges follow: cysteine 149-cysteine 154, cysteine 167-cysteine 255, cysteine 171-cysteine 257, and cysteine 236-cysteine 249.

In terms of assembly, homodimer; disulfide-linked.

The protein resides in the membrane. Its function is as follows. Receptor on natural killer (NK) cells for class I MHC. The chain is Killer cell lectin-like receptor 6 (Klra6) from Mus musculus (Mouse).